We begin with the raw amino-acid sequence, 160 residues long: MATPITTIKKETKTAEQIKLEKIEELKELLAENEDAVSKTMTLMNELNDLGIFDAATSMLRAKEDIAKIALGQVSREPVTNLINTMMAAGGALTKADPEFTAKLLESVMAGTEQAQSFLKEDKKVGILDLLKAMNDPDINRAVGFGLQFLKGMGKELREQ.

It to A.fulgidus AF1717.

This is an uncharacterized protein from Bacillus subtilis (strain 168).